We begin with the raw amino-acid sequence, 739 residues long: tRNA 5-methylaminomethyl-2-thiouridine biosynthesis bifunctional protein MnmC (739 aa).

The segment at 1–282 (MDKVTPAKLS…KREMLTATKL (282 aa)) is tRNA (mnm(5)s(2)U34)-methyltransferase. Residues 330-739 (IGAGVCGLMA…HRSSLKKPLS (410 aa)) form an FAD-dependent cmnm(5)s(2)U34 oxidoreductase region.

In the N-terminal section; belongs to the methyltransferase superfamily. tRNA (mnm(5)s(2)U34)-methyltransferase family. It in the C-terminal section; belongs to the DAO family. FAD is required as a cofactor.

The protein resides in the cytoplasm. It carries out the reaction 5-aminomethyl-2-thiouridine(34) in tRNA + S-adenosyl-L-methionine = 5-methylaminomethyl-2-thiouridine(34) in tRNA + S-adenosyl-L-homocysteine + H(+). Catalyzes the last two steps in the biosynthesis of 5-methylaminomethyl-2-thiouridine (mnm(5)s(2)U) at the wobble position (U34) in tRNA. Catalyzes the FAD-dependent demodification of cmnm(5)s(2)U34 to nm(5)s(2)U34, followed by the transfer of a methyl group from S-adenosyl-L-methionine to nm(5)s(2)U34, to form mnm(5)s(2)U34. This Psychrobacter sp. (strain PRwf-1) protein is tRNA 5-methylaminomethyl-2-thiouridine biosynthesis bifunctional protein MnmC.